The primary structure comprises 175 residues: Isopentenyl-diphosphate Delta-isomerase (175 aa).

Mn(2+) is bound by residues H23 and H30. In terms of domain architecture, Nudix hydrolase spans 28–162 (TLHLAFCVFV…PLRYTPWFRR (135 aa)). The active site involves C65. Position 67 (H67) interacts with Mn(2+). E85 is a binding site for Mg(2+). Mn(2+) is bound by residues E111 and E113. E113 is an active-site residue.

It belongs to the IPP isomerase type 1 family. It depends on Mg(2+) as a cofactor. Mn(2+) serves as cofactor.

It is found in the cytoplasm. It carries out the reaction isopentenyl diphosphate = dimethylallyl diphosphate. It participates in isoprenoid biosynthesis; dimethylallyl diphosphate biosynthesis; dimethylallyl diphosphate from isopentenyl diphosphate: step 1/1. Catalyzes the 1,3-allylic rearrangement of the homoallylic substrate isopentenyl (IPP) to its highly electrophilic allylic isomer, dimethylallyl diphosphate (DMAPP). In Halorhodospira halophila (strain DSM 244 / SL1) (Ectothiorhodospira halophila (strain DSM 244 / SL1)), this protein is Isopentenyl-diphosphate Delta-isomerase.